Consider the following 254-residue polypeptide: Alcohol dehydrogenase (254 aa).

Residue 10–33 (FVAGLGGIGLDTSRELVKRNLKNL) participates in NAD(+) binding. Ser138 is a substrate binding site. Tyr151 acts as the Proton acceptor in catalysis.

This sequence belongs to the short-chain dehydrogenases/reductases (SDR) family. In terms of assembly, homodimer.

The enzyme catalyses a primary alcohol + NAD(+) = an aldehyde + NADH + H(+). It carries out the reaction a secondary alcohol + NAD(+) = a ketone + NADH + H(+). The chain is Alcohol dehydrogenase (Adh) from Drosophila persimilis (Fruit fly).